A 268-amino-acid polypeptide reads, in one-letter code: MICOS complex subunit MIC27 (268 aa).

Residues 1–27 constitute a mitochondrion transit peptide; sequence MAAIRMGKLTTMPAGLIYASVSVHAAK. Residues 28-110 lie on the Mitochondrial intermembrane side of the membrane; sequence QEESKKQLVK…YVYLKNPPRD (83 aa). A helical transmembrane segment spans residues 111–129; sequence FLPKMGVITVSGLAGLVSA. The Mitochondrial matrix portion of the chain corresponds to 130–137; it reads RKGSKFKK. The chain crosses the membrane as a helical span at residues 138–155; that stretch reads ITYPLGLATLGATVCYPV. At 156-268 the chain is on the mitochondrial intermembrane side; that stretch reads QSVIIAKVTA…EDIDMYSTRS (113 aa). Basic and acidic residues predominate over residues 187–200; that stretch reads SKEESLPKPKEKTK. Residues 187–268 are disordered; it reads SKEESLPKPK…EDIDMYSTRS (82 aa). A Phosphoserine modification is found at serine 204. The span at 249 to 260 shows a compositional bias: basic and acidic residues; it reads KLMDHGQSHPED.

The protein belongs to the apolipoprotein O/MICOS complex subunit Mic27 family. In terms of assembly, component of the mitochondrial contact site and cristae organizing system (MICOS) complex, composed of at least MICOS10/MIC10, CHCHD3/MIC19, CHCHD6/MIC25, APOOL/MIC27, IMMT/MIC60, APOO/MIC23/MIC26 and MICOS13/MIC13. This complex was also known under the names MINOS or MitOS complex. The MICOS complex associates with mitochondrial outer membrane proteins SAMM50, MTX1 and MTX2 (together described as components of the mitochondrial outer membrane sorting assembly machinery (SAM) complex) and DNAJC11, mitochondrial inner membrane protein TMEM11 and with HSPA9. The MICOS and SAM complexes together with DNAJC11 are part of a large protein complex spanning both membranes termed the mitochondrial intermembrane space bridging (MIB) complex. Interacts with MICOS10/MIC10, IMMT/MIC60 and APOO/MIC23/MIC26.

The protein localises to the mitochondrion inner membrane. The protein resides in the mitochondrion. Functionally, component of the MICOS complex, a large protein complex of the mitochondrial inner membrane that plays crucial roles in the maintenance of crista junctions, inner membrane architecture, and formation of contact sites to the outer membrane. Specifically binds to cardiolipin (in vitro) but not to the precursor lipid phosphatidylglycerol. Plays a crucial role in crista junction formation and mitochondrial function,. This chain is MICOS complex subunit MIC27 (APOOL), found in Homo sapiens (Human).